The sequence spans 27 residues: thr operon leader peptide (27 aa).

Belongs to the thr operon leader peptide family.

Functionally, this protein is involved in control of the biosynthesis of threonine. The protein is thr operon leader peptide of Escherichia coli O157:H7.